We begin with the raw amino-acid sequence, 46 residues long: U-limacoditoxin(6)-Dv61 (46 aa).

The first 19 residues, 1–19 (MSKLLVLLMTTALATLAQA), serve as a signal peptide directing secretion.

This sequence belongs to the limacoditoxin-6 family. As to expression, expressed by the venom secretory cell of the spine. The spine is a cuticular structure containing a single large nucleated venom-secreting cell at its base. It is an independent unit capable of producing, storing and injecting venom. On the back of D.vulnerans caterpillars, spines are grouped together by 50 to 100 to form scoli, of which there are eight in D.vulnerans.

The protein resides in the secreted. In terms of biological role, probable toxin. Does not show insecticidal, antimicrobial and antiparasitic activities. Does not induce increase in intracellular calcium in mouse DRG neurons, suggesting that it does not induce pain. The sequence is that of U-limacoditoxin(6)-Dv61 from Doratifera vulnerans (Mottled cup moth).